A 663-amino-acid chain; its full sequence is Chaperone protein HtpG (663 aa).

Positions 1 to 352 are a; substrate-binding; the sequence is MTKQTLSFQA…SADLPLNVSR (352 aa). Residues 218–228 show a composition bias toward basic and acidic residues; that stretch reads ELINPSDEKGG. The interval 218 to 237 is disordered; sequence ELINPSDEKGGRQPGGMVKT. Residues 353–595 are b; sequence ELLQESRDVK…DHGMSTQLAR (243 aa). The segment at 596–663 is c; the sequence is MLKQAGQAAP…YVKRVNALLV (68 aa).

It belongs to the heat shock protein 90 family. As to quaternary structure, homodimer.

The protein localises to the cytoplasm. Its function is as follows. Molecular chaperone. Has ATPase activity. The polypeptide is Chaperone protein HtpG (Albidiferax ferrireducens (strain ATCC BAA-621 / DSM 15236 / T118) (Rhodoferax ferrireducens)).